The following is a 901-amino-acid chain: HTH-type transcriptional regulator MalT (901 aa).

39–46 (SPAGYGKT) is a binding site for ATP. Residues 829–894 (ELIRTSPLTQ…DAVQHAQQLL (66 aa)) form the HTH luxR-type domain. Positions 853 to 872 (NEQIAGELEVAATTIKTHIR) form a DNA-binding region, H-T-H motif.

This sequence belongs to the MalT family. In terms of assembly, monomer in solution. Oligomerizes to an active state in the presence of the positive effectors ATP and maltotriose.

Its activity is regulated as follows. Activated by ATP and maltotriose, which are both required for DNA binding. Positively regulates the transcription of the maltose regulon whose gene products are responsible for uptake and catabolism of malto-oligosaccharides. Specifically binds to the promoter region of its target genes, recognizing a short DNA motif called the MalT box. The polypeptide is HTH-type transcriptional regulator MalT (Escherichia fergusonii (strain ATCC 35469 / DSM 13698 / CCUG 18766 / IAM 14443 / JCM 21226 / LMG 7866 / NBRC 102419 / NCTC 12128 / CDC 0568-73)).